Reading from the N-terminus, the 349-residue chain is MTTQPSAPLTYRDAGVDIDAGDALVDRIKPLAARTMRPGVLAGIGGFGALFQVPGKYREPVLVSGTDGVGTKLRLAFEWNRHDTVGVDLVAMSVNDILVQGAEPLFFLDYFACGKLSVDTAAAVVGGIARGCELAGCALIGGETAEMPGMYPDGEYDLAGFAVGAVEKSAILDGKSIQPGDVVLGLASSGAHSNGYSLVRKILDRAGARPDQDFHGQPLADVVMAPTRIYVKQVLAALAAHTGGIKGLAHITGGGLLDNVPRILQPGLSARLHRDAWQMPQLFQWLQQQGGVADTEMHRVFNCGIGMVIVVDAAQADAVAATLAAQGETVSRIGEIVAQKDGEAQTVVV.

The protein belongs to the AIR synthase family.

It is found in the cytoplasm. It catalyses the reaction 2-formamido-N(1)-(5-O-phospho-beta-D-ribosyl)acetamidine + ATP = 5-amino-1-(5-phospho-beta-D-ribosyl)imidazole + ADP + phosphate + H(+). It functions in the pathway purine metabolism; IMP biosynthesis via de novo pathway; 5-amino-1-(5-phospho-D-ribosyl)imidazole from N(2)-formyl-N(1)-(5-phospho-D-ribosyl)glycinamide: step 2/2. This is Phosphoribosylformylglycinamidine cyclo-ligase from Bordetella petrii (strain ATCC BAA-461 / DSM 12804 / CCUG 43448).